The following is a 314-amino-acid chain: Deoxymugineic acid synthase 1 (314 aa).

Positions Met1–Gln21 are disordered. Residue Asp44 participates in NADP(+) binding. Residue Tyr49 is the Proton donor of the active site. His112 serves as a coordination point for substrate. NADP(+) contacts are provided by residues Ala158–Asn159, Gln180, Phe258–Asn266, and Glu273–Arg281.

The protein belongs to the aldo/keto reductase family.

The catalysed reaction is 2'-deoxymugineate + NAD(+) = 3''-deamino-3''-oxonicotianamine + NADH + H(+). It catalyses the reaction 2'-deoxymugineate + NADP(+) = 3''-deamino-3''-oxonicotianamine + NADPH + H(+). Its pathway is siderophore biosynthesis. In terms of biological role, catalyzes the reduction of a 3''-keto intermediate during the biosynthesis of 2'-deoxymugineic acid (DMA) from L-Met. Involved in the formation of phytosiderophores (MAs) belonging to the mugineic acid family and required to acquire iron. The protein is Deoxymugineic acid synthase 1 of Hordeum vulgare (Barley).